We begin with the raw amino-acid sequence, 127 residues long: Fluoride-specific ion channel FluC 1 (127 aa).

3 helical membrane passes run 6-26, 29-49, and 95-115; these read PLVT…GSNL, FVGL…CGSF, and EWAV…VLVG.

Belongs to the fluoride channel Fluc/FEX (TC 1.A.43) family.

The protein resides in the cell membrane. It catalyses the reaction fluoride(in) = fluoride(out). Fluoride-specific ion channel. Important for reducing fluoride concentration in the cell, thus reducing its toxicity. The chain is Fluoride-specific ion channel FluC 1 from Haloarcula marismortui (strain ATCC 43049 / DSM 3752 / JCM 8966 / VKM B-1809) (Halobacterium marismortui).